The chain runs to 677 residues: Secretogranin-1 (677 aa).

Residues methionine 1 to serine 20 form the signal peptide. Cysteine 36 and cysteine 57 are disulfide-bonded. Disordered regions lie at residues lysine 63–glutamate 505 and asparagine 531–threonine 558. Residues serine 64–alanine 90 are compositionally biased toward basic and acidic residues. Phosphoserine occurs at positions 93, 99, and 100. Serine 93 is a glycosylation site (O-linked (Xyl...) (chondroitin sulfate) serine). O-linked (GalNAc...) threonine glycosylation occurs at threonine 115. A compositionally biased stretch (basic and acidic residues) spans glycine 118–valine 133. A phosphoserine mark is found at serine 129, serine 147, serine 190, and serine 220. Basic and acidic residues-rich tracts occupy residues lysine 148–glutamate 192 and lysine 200–glutamate 249. An O-linked (Xyl...) (chondroitin sulfate) serine glycan is attached at serine 237. Residues threonine 251 to alanine 280 show a composition bias toward acidic residues. Serine 256, serine 260, serine 300, serine 301, serine 318, and serine 342 each carry phosphoserine. Over residues proline 306 to aspartate 322 the composition is skewed to basic and acidic residues. Position 348 is a sulfotyrosine (tyrosine 348). Composition is skewed to basic and acidic residues over residues arginine 363–tyrosine 409 and glycine 421–lysine 455. Phosphoserine occurs at positions 365, 375, and 378. Residue tyrosine 472 is modified to Sulfotyrosine. A compositionally biased stretch (basic and acidic residues) spans glutamate 491–tyrosine 504. Phosphoserine is present on residues serine 493, serine 532, and serine 543. Sulfotyrosine occurs at positions 566 and 624. The interval aspartate 622–arginine 646 is disordered. Position 626 is a phosphoserine (serine 626). The segment covering glutamate 635–arginine 646 has biased composition (basic and acidic residues).

This sequence belongs to the chromogranin/secretogranin protein family. As to quaternary structure, interacts with ITPR1 in the secretory granules.

Its subcellular location is the secreted. Its function is as follows. Secretogranin-1 is a neuroendocrine secretory granule protein, which may be the precursor for other biologically active peptides. The protein is Secretogranin-1 (Chgb) of Mus musculus (Mouse).